Here is a 340-residue protein sequence, read N- to C-terminus: Dihydroorotate dehydrogenase (quinone) (340 aa).

Residues 63-67 (AGLDK) and T87 contribute to the FMN site. K67 provides a ligand contact to substrate. 112–116 (NRMGF) provides a ligand contact to substrate. The FMN site is built by N140 and N173. Residue N173 coordinates substrate. S176 (nucleophile) is an active-site residue. Residue N178 participates in substrate binding. FMN-binding residues include K218 and T246. 247–248 (NT) contributes to the substrate binding site. FMN contacts are provided by residues G269, G298, and 319–320 (YT).

It belongs to the dihydroorotate dehydrogenase family. Type 2 subfamily. In terms of assembly, monomer. Requires FMN as cofactor.

It is found in the cell membrane. It catalyses the reaction (S)-dihydroorotate + a quinone = orotate + a quinol. Its pathway is pyrimidine metabolism; UMP biosynthesis via de novo pathway; orotate from (S)-dihydroorotate (quinone route): step 1/1. Its function is as follows. Catalyzes the conversion of dihydroorotate to orotate with quinone as electron acceptor. The sequence is that of Dihydroorotate dehydrogenase (quinone) from Methylococcus capsulatus (strain ATCC 33009 / NCIMB 11132 / Bath).